We begin with the raw amino-acid sequence, 641 residues long: MTTSRLPFSLTKTKNFYEELNNWIGDVFYDILPEKGFDLRDEQVFMAFQLERAFKEKKVMFAEAGVGTGKTLVYLLFAISYARYVGKPAIIACADETLIEQLVKKEGDISKLAEHLDLKIDTRLSKSHEQYLCLKKLEKTMQRSDDDKWLDLYESLPSFVHESQAMQRFYPYGDRKQYANLSNEEWSDVSYDSFQDCLTCDMRHRCGLTLSRDYYRKSTDLIICSHDFYMEHVWTEESRKREGQLPLLPDHSAVVFDEGHLLEFAAQKALTYRVKQSTLELFLERLLQNDIREEFAELIEDALLANDEFFYVLSEESKEVAGSHRLEIKNDHRVKKAADELCRLLDKIGEALVFESEMYTIDQYELSVVEEYVEQMAYSLSLYQKDAISWLEKKEAESTFVVMPRTVAEVLGEKVFSKKIPYIFSSATLSEGGSFDYIADSLGIHDYLSLTVDSPYDYDEQMSINLYAKTDMDAEQKTAETIETIKRYKGRTLVLFPSFEELNEFKELSAAWELPYPIFFEGDEEISSLVEKFQEEEETVLCSVHLWEGLDIPGDALKNVTIWSLPFPPHDPVFTAKRNGAKKDPFEEVDLPYMLLRVRQGIGRLIRSNQDSGSIHIYAGGENERIIDEVKKVLPVEPHMM.

The 275-residue stretch at 29–303 (YDILPEKGFD…EFAELIEDAL (275 aa)) folds into the Helicase ATP-binding domain. Residue 64–71 (AGVGTGKT) coordinates ATP. Cys133, Cys197, Cys200, and Cys206 together coordinate [4Fe-4S] cluster. The DEGH box motif lies at 257 to 260 (DEGH).

This sequence belongs to the helicase family. DinG subfamily. The cofactor is [4Fe-4S] cluster.

It carries out the reaction Couples ATP hydrolysis with the unwinding of duplex DNA at the replication fork by translocating in the 5'-3' direction. This creates two antiparallel DNA single strands (ssDNA). The leading ssDNA polymer is the template for DNA polymerase III holoenzyme which synthesizes a continuous strand.. The catalysed reaction is ATP + H2O = ADP + phosphate + H(+). Its function is as follows. Might be a 5'-3' DNA helicase. The polypeptide is Probable ATP-dependent helicase YpvA (ypvA) (Bacillus subtilis (strain 168)).